The primary structure comprises 231 residues: Sugar fermentation stimulation protein homolog (231 aa).

It belongs to the SfsA family.

This is Sugar fermentation stimulation protein homolog from Pyrobaculum islandicum (strain DSM 4184 / JCM 9189 / GEO3).